We begin with the raw amino-acid sequence, 128 residues long: Sirohydrochlorin cobaltochelatase (128 aa).

His9 serves as the catalytic Proton acceptor. Position 9 (His9) interacts with Co(2+). Substrate-binding positions include Lys43 and 68-73 (FATGTH). Co(2+) is bound at residue His73.

The protein belongs to the CbiX family. CbiXS subfamily. As to quaternary structure, homotetramer; dimer of dimers.

The catalysed reaction is Co-sirohydrochlorin + 2 H(+) = sirohydrochlorin + Co(2+). The protein operates within cofactor biosynthesis; adenosylcobalamin biosynthesis; cob(II)yrinate a,c-diamide from sirohydrochlorin (anaerobic route): step 1/10. Functionally, catalyzes the insertion of Co(2+) into sirohydrochlorin as part of the anaerobic pathway to cobalamin biosynthesis. The chain is Sirohydrochlorin cobaltochelatase from Saccharolobus solfataricus (strain ATCC 35092 / DSM 1617 / JCM 11322 / P2) (Sulfolobus solfataricus).